A 387-amino-acid chain; its full sequence is Acyl-CoA dehydrogenase FadE29 (387 aa).

Residues 123–126 (IGYT), T132, and T158 contribute to the FAD site. E241 acts as the Proton acceptor in catalysis. 367 to 369 (VNE) lines the FAD pocket.

This sequence belongs to the acyl-CoA dehydrogenase family. Heterotetramer composed of FadE28 and FadE29. FAD serves as cofactor.

It carries out the reaction 3-oxochol-4-en-22-oyl-CoA + A = 3-oxochola-4,17-dien-22-oyl-CoA + AH2. It functions in the pathway steroid metabolism; cholesterol degradation. Its function is as follows. Involved in the third cycle of side chain dehydrogenation in the beta-oxidation of cholesterol catabolism. Contributes partly to the virulence by increasing the efficiency of beta-oxidation. Catalyzes the dehydrogenation of 2'-propanoyl-CoA ester side chains of 3-oxo-4-pregnene-20-carboxyl-CoA (3-OPC-CoA) to yield 3-oxo-4,17-pregnadiene-20-carboxyl-CoA (3-OPDC-CoA). Also able to dehydrogenate steroyl-CoA such as 3-oxo-chol-4-en-24-oyl-CoA (3-OCO-CoA), 1beta-(2'-propanoyl-CoA)-3a-alpha-H- 7a-beta-methylhexahydro-4-indanone (indanone-CoA ester), hexahydroindanone and pregenenone. This chain is Acyl-CoA dehydrogenase FadE29 (fadE29), found in Mycobacterium tuberculosis (strain ATCC 25618 / H37Rv).